Consider the following 210-residue polypeptide: Cytidylate kinase (210 aa).

Residue 9–17 (GPAAAGKGT) participates in ATP binding.

This sequence belongs to the cytidylate kinase family. Type 1 subfamily.

It is found in the cytoplasm. It carries out the reaction CMP + ATP = CDP + ADP. The enzyme catalyses dCMP + ATP = dCDP + ADP. In Agrobacterium fabrum (strain C58 / ATCC 33970) (Agrobacterium tumefaciens (strain C58)), this protein is Cytidylate kinase.